A 195-amino-acid polypeptide reads, in one-letter code: Recombination protein RecR (195 aa).

Residues 53-68 form a C4-type zinc finger; the sequence is CTICHNLDTISPCSIC. Residues 76–171 form the Toprim domain; it reads SIICVVEELG…KVTRLACGIP (96 aa).

It belongs to the RecR family.

Its function is as follows. May play a role in DNA repair. It seems to be involved in an RecBC-independent recombinational process of DNA repair. It may act with RecF and RecO. In Anaplasma marginale (strain St. Maries), this protein is Recombination protein RecR.